Consider the following 55-residue polypeptide: Large ribosomal subunit protein bL33 (55 aa).

The protein belongs to the bacterial ribosomal protein bL33 family.

This Sinorhizobium fredii (strain NBRC 101917 / NGR234) protein is Large ribosomal subunit protein bL33.